Consider the following 1284-residue polypeptide: ABC multidrug transporter atrC (1284 aa).

The span at M1–P11 shows a compositional bias: basic and acidic residues. Residues M1 to E24 are disordered. Transmembrane regions (helical) follow at residues A55–F75, A99–T119, I178–V198, T203–V223, L282–F302, and I320–Y340. The 292-residue stretch at A55–R346 folds into the ABC transmembrane type-1 1 domain. The 246-residue stretch at V381–I626 folds into the ABC transporter 1 domain. 2 N-linked (GlcNAc...) asparagine glycosylation sites follow: N385 and N401. G416–S423 is a binding site for ATP. N488 and N632 each carry an N-linked (GlcNAc...) asparagine glycan. 2 consecutive transmembrane segments (helical) span residues L705–M725 and F745–G765. The ABC transmembrane type-1 2 domain maps to L705 to K992. N800 is a glycosylation site (N-linked (GlcNAc...) asparagine). 4 helical membrane passes run I824–F844, W846–V866, M931–Y951, and L955–F975. N995 is a glycosylation site (N-linked (GlcNAc...) asparagine). Residues I1027–A1280 enclose the ABC transporter 2 domain. G1062–S1069 provides a ligand contact to ATP. N1122 carries an N-linked (GlcNAc...) asparagine glycan.

The protein belongs to the ABC transporter superfamily. ABCB family. Multidrug resistance exporter (TC 3.A.1.201) subfamily.

The protein resides in the cell membrane. Pleiotropic ABC efflux transporter involved in the protection of the cells against a wide range of toxic compounds. The protein is ABC multidrug transporter atrC of Emericella nidulans (strain FGSC A4 / ATCC 38163 / CBS 112.46 / NRRL 194 / M139) (Aspergillus nidulans).